The following is a 125-amino-acid chain: Small ribosomal subunit protein uS12m (125 aa).

Residues 1–27 form a disordered region; that stretch reads MPTKNQLIRHGREEKRRTDRTRALDQC. Positions 10 to 23 are enriched in basic and acidic residues; sequence HGREEKRRTDRTRA.

Belongs to the universal ribosomal protein uS12 family.

The protein resides in the mitochondrion. Functionally, protein S12 is involved in the translation initiation step. The chain is Small ribosomal subunit protein uS12m (RPS12) from Triticum aestivum (Wheat).